Consider the following 176-residue polypeptide: Urease accessory protein UreE (176 aa).

A disordered region spans residues 134 to 176 (EAGAYGSGGHHHHGESSQGHAHGPLAPIPVHQKIHRPSDIPSR).

It belongs to the UreE family.

The protein localises to the cytoplasm. Involved in urease metallocenter assembly. Binds nickel. Probably functions as a nickel donor during metallocenter assembly. The sequence is that of Urease accessory protein UreE from Nitrosospira multiformis (strain ATCC 25196 / NCIMB 11849 / C 71).